The primary structure comprises 756 residues: Tubulin glycylase 3B (756 aa).

Residues 104 to 123 form a disordered region; it reads TPLPRTVTSSPTAPEAQKRQ. One can recognise a TTL domain in the interval 272-629; it reads LEERMAFIED…DLPKNPTAAT (358 aa). Residues 440–443, Lys-453, and Asp-455 contribute to the ATP site; that span reads QKYI. The interval 709–736 is disordered; it reads ITKKKKLSASAGSSTAASAQPSTQNLTT. Residues 716-727 show a composition bias toward low complexity; sequence SASAGSSTAASA.

It is found in the cytoplasm. Its subcellular location is the cytoskeleton. The protein resides in the nucleus. Functionally, essential glycylase which modifies both tubulin and non-tubulin proteins, generating side chains of glycine on the gamma-carboxyl groups of specific glutamate residues of target proteins. Monoglycylates alpha-tubulin by adding a single glycine chain to generate monoglycine side chains, but is not involved in elongation step to generate polyglycine side chains on alpha-tubulin. Has the ability to both mono- and polyglycylate non-tubulin proteins such as up (Troponin T). Required for early steps of spermatogenesis. The sequence is that of Tubulin glycylase 3B (TTLL3B) from Drosophila melanogaster (Fruit fly).